A 69-amino-acid chain; its full sequence is Guanine nucleotide-binding protein G(I)/G(S)/G(O) subunit gamma-T2 (69 aa).

At Cys-66 the chain carries Cysteine methyl ester. Cys-66 carries S-farnesyl cysteine lipidation. The propeptide at 67–69 (IIS) is removed in mature form.

This sequence belongs to the G protein gamma family. In terms of assembly, g proteins are composed of 3 units, alpha, beta and gamma.

It is found in the cell membrane. Guanine nucleotide-binding proteins (G proteins) are involved as a modulator or transducer in various transmembrane signaling systems. The beta and gamma chains are required for the GTPase activity, for replacement of GDP by GTP, and for G protein-effector interaction. The protein is Guanine nucleotide-binding protein G(I)/G(S)/G(O) subunit gamma-T2 (GNGT2) of Bos taurus (Bovine).